We begin with the raw amino-acid sequence, 191 residues long: MAP6 domain-containing protein 1 (191 aa).

3 S-palmitoyl cysteine lipidation sites follow: cysteine 5, cysteine 10, and cysteine 11. The disordered stretch occupies residues 31 to 106 (HGYSDPGSEE…RGQSSAPPTR (76 aa)). 2 positions are modified to phosphoserine: serine 38 and serine 41. Mn stretches follow at residues 123 to 136 (TTSY…WTGV) and 158 to 170 (DPSP…VPEV). Phosphoserine is present on serine 160.

This sequence belongs to the STOP family. As to quaternary structure, interacts with calmodulin. Post-translationally, palmitoylated. Palmitoylation enhances association with microtubules. In terms of tissue distribution, expressed in brain. Found in neurons in primary cultures, but absent in glial cells.

It localises to the golgi apparatus. Its subcellular location is the cytoplasm. The protein localises to the cytoskeleton. In terms of biological role, may have microtubule-stabilizing activity. This chain is MAP6 domain-containing protein 1 (Map6d1), found in Mus musculus (Mouse).